Consider the following 128-residue polypeptide: Fluoride-specific ion channel FluC (128 aa).

A run of 4 helical transmembrane segments spans residues 3–23, 34–54, 65–85, and 102–122; these read FTTI…RSFT, LSFP…IGFL, INLK…FSTF, and FLNI…GFWI. Na(+) is bound by residues Gly-77 and Thr-80.

It belongs to the fluoride channel Fluc/FEX (TC 1.A.43) family.

Its subcellular location is the cell inner membrane. The catalysed reaction is fluoride(in) = fluoride(out). Its activity is regulated as follows. Na(+) is not transported, but it plays an essential structural role and its presence is essential for fluoride channel function. Its function is as follows. Fluoride-specific ion channel. Important for reducing fluoride concentration in the cell, thus reducing its toxicity. The sequence is that of Fluoride-specific ion channel FluC from Campylobacter fetus subsp. fetus (strain 82-40).